The primary structure comprises 185 residues: Transcription factor E (185 aa).

The 84-residue stretch at 5–88 (KNKELLEIAQ…YWRLETKKLP (84 aa)) folds into the HTH TFE/IIEalpha-type domain.

This sequence belongs to the TFE family. As to quaternary structure, monomer. Interaction with RNA polymerase subunits RpoF and RpoE is necessary for Tfe stimulatory transcription activity. Able to interact with Tbp and RNA polymerase in the absence of DNA promoter. Interacts both with the preinitiation and elongation complexes.

Transcription factor that plays a role in the activation of archaeal genes transcribed by RNA polymerase. Facilitates transcription initiation by enhancing TATA-box recognition by TATA-box-binding protein (Tbp), and transcription factor B (Tfb) and RNA polymerase recruitment. Not absolutely required for transcription in vitro, but particularly important in cases where Tbp or Tfb function is not optimal. It dynamically alters the nucleic acid-binding properties of RNA polymerases by stabilizing the initiation complex and destabilizing elongation complexes. Seems to translocate with the RNA polymerase following initiation and acts by binding to the non template strand of the transcription bubble in elongation complexes. This chain is Transcription factor E, found in Thermococcus kodakarensis (strain ATCC BAA-918 / JCM 12380 / KOD1) (Pyrococcus kodakaraensis (strain KOD1)).